The primary structure comprises 416 residues: Phosphoglycerate kinase (416 aa).

The (2R)-3-phosphoglycerate site is built by V23, D24, F25, N26, Q39, R40, S63, H64, G66, R67, L122, R123, H170, and R171. G214 serves as a coordination point for ADP. G214 contacts CDP. AMP-binding residues include A215 and K216. Residue A215 participates in ATP binding. A215 contacts Mg(2+). A CDP-binding site is contributed by D219. Residue D219 participates in Mg(2+) binding. K220 provides a ligand contact to AMP. K220 is an ATP binding site. G238 contacts ADP. Residue G238 participates in CDP binding. G239 and G312 together coordinate AMP. Positions 239 and 312 each coordinate ATP. Residues G337, A339, and F342 each contribute to the CDP site. An ADP-binding site is contributed by F342. E343 contacts AMP. ATP is bound by residues E343, D374, and T375. Position 374 (D374) interacts with Mg(2+).

It belongs to the phosphoglycerate kinase family. In terms of assembly, monomer. Mg(2+) serves as cofactor.

Its subcellular location is the cytoplasm. It is found in the mitochondrion. The enzyme catalyses (2R)-3-phosphoglycerate + ATP = (2R)-3-phospho-glyceroyl phosphate + ADP. Its pathway is carbohydrate degradation; glycolysis; pyruvate from D-glyceraldehyde 3-phosphate: step 2/5. Catalyzes one of the two ATP producing reactions in the glycolytic pathway via the reversible conversion of 1,3-diphosphoglycerate to 3-phosphoglycerate. Both L- and D- forms of purine and pyrimidine nucleotides can be used as substrates, but the activity is much lower on pyrimidines. Negatively regulates the biosynthesis of acetyl-CoA from pyruvate in the mitochondrion. The protein is Phosphoglycerate kinase (pgk1) of Hypocrea jecorina (Trichoderma reesei).